A 169-amino-acid chain; its full sequence is Large ribosomal subunit protein bL17 (169 aa).

The interval 124–169 (EKAVKRQDRSRRVKGSKKAIDEKTSDDSASVEAAPAAPEAEEKKDA) is disordered. A compositionally biased stretch (basic residues) spans 131–140 (DRSRRVKGSK). Positions 150–161 (DSASVEAAPAAP) are enriched in low complexity.

The protein belongs to the bacterial ribosomal protein bL17 family. As to quaternary structure, part of the 50S ribosomal subunit. Contacts protein L32.

In Chloroherpeton thalassium (strain ATCC 35110 / GB-78), this protein is Large ribosomal subunit protein bL17.